The following is a 326-amino-acid chain: Tetraacyldisaccharide 4'-kinase (326 aa).

Position 58–65 (58–65) interacts with ATP; the sequence is SVGGNGKT.

This sequence belongs to the LpxK family.

The enzyme catalyses a lipid A disaccharide + ATP = a lipid IVA + ADP + H(+). It participates in glycolipid biosynthesis; lipid IV(A) biosynthesis; lipid IV(A) from (3R)-3-hydroxytetradecanoyl-[acyl-carrier-protein] and UDP-N-acetyl-alpha-D-glucosamine: step 6/6. Its function is as follows. Transfers the gamma-phosphate of ATP to the 4'-position of a tetraacyldisaccharide 1-phosphate intermediate (termed DS-1-P) to form tetraacyldisaccharide 1,4'-bis-phosphate (lipid IVA). This is Tetraacyldisaccharide 4'-kinase from Pseudoalteromonas translucida (strain TAC 125).